Reading from the N-terminus, the 537-residue chain is Membrane protein insertase YidC (537 aa).

5 helical membrane-spanning segments follow: residues 6–26 (SLLA…WEID), 341–363 (LVSN…LYPL), 411–431 (LGGC…YWTF), 449–469 (LSAQ…MFLL), and 490–510 (PVIF…YWLV).

This sequence belongs to the OXA1/ALB3/YidC family. Type 1 subfamily. As to quaternary structure, interacts with the Sec translocase complex via SecD. Specifically interacts with transmembrane segments of nascent integral membrane proteins during membrane integration.

Its subcellular location is the cell inner membrane. In terms of biological role, required for the insertion and/or proper folding and/or complex formation of integral membrane proteins into the membrane. Involved in integration of membrane proteins that insert both dependently and independently of the Sec translocase complex, as well as at least some lipoproteins. Aids folding of multispanning membrane proteins. This Actinobacillus succinogenes (strain ATCC 55618 / DSM 22257 / CCUG 43843 / 130Z) protein is Membrane protein insertase YidC.